The chain runs to 151 residues: Regulatory protein RecX (151 aa).

The protein belongs to the RecX family.

The protein localises to the cytoplasm. Its function is as follows. Modulates RecA activity. This Prosthecochloris aestuarii (strain DSM 271 / SK 413) protein is Regulatory protein RecX.